Here is a 436-residue protein sequence, read N- to C-terminus: uncharacterized protein (436 aa).

This is an uncharacterized protein from Treponema pallidum (strain Nichols).